Here is a 512-residue protein sequence, read N- to C-terminus: Dihydroniloticin synthase CYP71CD2 (512 aa).

The helical transmembrane segment at Met1–Phe21 threads the bilayer. Position 436 (Asn436) interacts with heme.

It belongs to the cytochrome P450 family. Heme serves as cofactor. As to expression, mainly expressed in petioles and roots, and, to a lower extent, in leaves.

Its subcellular location is the membrane. It carries out the reaction tirucalla-7,24-dien-3beta-ol + 2 reduced [NADPH--hemoprotein reductase] + 2 O2 = dihydroniloticin + 2 oxidized [NADPH--hemoprotein reductase] + 2 H2O + 2 H(+). The protein operates within secondary metabolite biosynthesis; terpenoid biosynthesis. Its function is as follows. Monooxygenase involved in the biosynthesis of limonoids triterpene natural products such as azadirachtin, an antifeedant widely used as bioinsecticide, and possessing many medicinal applications including anti-tumoral, anti-malarial, anti-rheumatic, antibacterial, anti-inflammatory, anti-pyretic and diuretic effects. Catalyzes the conversion of tirucalladienol to dihydroniloticin. The chain is Dihydroniloticin synthase CYP71CD2 from Melia azedarach (Chinaberry tree).